Reading from the N-terminus, the 374-residue chain is Coiled-coil domain-containing protein 89 (374 aa).

The tract at residues 1–38 (MRAPMPQKEQAPRMDTSPPEERLEKQNEKLNNQEEEME) is disordered. Position 16 is a phosphothreonine (Thr-16). A compositionally biased stretch (basic and acidic residues) spans 19–32 (PEERLEKQNEKLNN). Residues 19-350 (PEERLEKQNE…YDELRLQSEA (332 aa)) are a coiled coil.

The protein belongs to the CCDC89 family. In terms of assembly, interacts with HEY1.

Its subcellular location is the cytoplasm. It localises to the nucleus. This Macaca fascicularis (Crab-eating macaque) protein is Coiled-coil domain-containing protein 89 (CCDC89).